Reading from the N-terminus, the 433-residue chain is ATP-dependent protease ATPase subunit HslU (433 aa).

Residues I18, 60-65, D246, E311, and R383 contribute to the ATP site; that span reads GVGKTE.

The protein belongs to the ClpX chaperone family. HslU subfamily. As to quaternary structure, a double ring-shaped homohexamer of HslV is capped on each side by a ring-shaped HslU homohexamer. The assembly of the HslU/HslV complex is dependent on binding of ATP.

The protein localises to the cytoplasm. Its function is as follows. ATPase subunit of a proteasome-like degradation complex; this subunit has chaperone activity. The binding of ATP and its subsequent hydrolysis by HslU are essential for unfolding of protein substrates subsequently hydrolyzed by HslV. HslU recognizes the N-terminal part of its protein substrates and unfolds these before they are guided to HslV for hydrolysis. The polypeptide is ATP-dependent protease ATPase subunit HslU (Cereibacter sphaeroides (strain ATCC 17029 / ATH 2.4.9) (Rhodobacter sphaeroides)).